The chain runs to 261 residues: 5'-nucleotidase SurE (261 aa).

Aspartate 8, aspartate 9, serine 39, and asparagine 94 together coordinate a divalent metal cation.

The protein belongs to the SurE nucleotidase family. A divalent metal cation is required as a cofactor.

It localises to the cytoplasm. It carries out the reaction a ribonucleoside 5'-phosphate + H2O = a ribonucleoside + phosphate. Functionally, nucleotidase that shows phosphatase activity on nucleoside 5'-monophosphates. The protein is 5'-nucleotidase SurE of Methanopyrus kandleri (strain AV19 / DSM 6324 / JCM 9639 / NBRC 100938).